Consider the following 108-residue polypeptide: ATP-dependent Clp protease adapter protein ClpS (108 aa).

The protein belongs to the ClpS family. Binds to the N-terminal domain of the chaperone ClpA.

Its function is as follows. Involved in the modulation of the specificity of the ClpAP-mediated ATP-dependent protein degradation. This chain is ATP-dependent Clp protease adapter protein ClpS, found in Cupriavidus metallidurans (strain ATCC 43123 / DSM 2839 / NBRC 102507 / CH34) (Ralstonia metallidurans).